The chain runs to 769 residues: Glutathione biosynthesis bifunctional protein GshAB (769 aa).

Residues 1–347 are glutamate--cysteine ligase; sequence MLDSFKEDPK…QLADENENNI (347 aa). Positions 514-768 constitute an ATP-grasp domain; sequence KLVLAEHDIR…IGDKILDFLF (255 aa). 541-599 contributes to the ATP binding site; it reads SLFEDKQIVVKPKSTNYGWGISIFKNKFTLEDYQEALNIAFSYDSSVIIEEFIPGDEFR. Residues Asp721, Glu738, and Asn740 each coordinate Mg(2+). Residues Asp721, Glu738, and Asn740 each coordinate Mn(2+).

This sequence in the N-terminal section; belongs to the glutamate--cysteine ligase type 1 family. Type 2 subfamily. As to quaternary structure, monomer. Requires Mg(2+) as cofactor. Mn(2+) is required as a cofactor.

It catalyses the reaction L-cysteine + L-glutamate + ATP = gamma-L-glutamyl-L-cysteine + ADP + phosphate + H(+). The catalysed reaction is gamma-L-glutamyl-L-cysteine + glycine + ATP = glutathione + ADP + phosphate + H(+). It participates in sulfur metabolism; glutathione biosynthesis; glutathione from L-cysteine and L-glutamate: step 1/2. Its pathway is sulfur metabolism; glutathione biosynthesis; glutathione from L-cysteine and L-glutamate: step 2/2. Synthesizes glutathione from L-glutamate and L-cysteine via gamma-L-glutamyl-L-cysteine. The polypeptide is Glutathione biosynthesis bifunctional protein GshAB (Listeria monocytogenes serotype 4b (strain F2365)).